Reading from the N-terminus, the 210-residue chain is Thymidylate kinase (210 aa).

11 to 18 is an ATP binding site; that stretch reads GLEGAGKS.

The protein belongs to the thymidylate kinase family.

It carries out the reaction dTMP + ATP = dTDP + ADP. In terms of biological role, phosphorylation of dTMP to form dTDP in both de novo and salvage pathways of dTTP synthesis. The polypeptide is Thymidylate kinase (Vibrio parahaemolyticus serotype O3:K6 (strain RIMD 2210633)).